Reading from the N-terminus, the 366-residue chain is G-protein coupled receptor 183-B (366 aa).

Residues 1–24 are Extracellular-facing; it reads MMSPDLDLNFSSNCNLYDHRPVAR. Residue N9 is glycosylated (N-linked (GlcNAc...) asparagine). A helical transmembrane segment spans residues 25 to 50; that stretch reads VLIPLVYSIICPVGLLGNALALHVVI. Topologically, residues 51-70 are cytoplasmic; the sequence is SSTTKINSITLYSANLAVSD. A helical membrane pass occupies residues 71 to 88; sequence ILFCLSLPLRAVYYGLGF. The Extracellular segment spans residues 89-98; the sequence is HWPMGEVLCK. A disulfide bridge links C97 with C175. Residues 99–120 form a helical membrane-spanning segment; that stretch reads AIALLFYLNCYAGVNFMTCLAV. At 121–142 the chain is on the cytoplasmic side; sequence DRFVALVFPARLAKLRKAKNVR. A helical transmembrane segment spans residues 143 to 161; the sequence is FVCLAIWLLVLAQTLPLLT. At 162–187 the chain is on the extracellular side; sequence IGLTKTEPDSSITCMEYPNFEGVFKG. A helical membrane pass occupies residues 188–210; the sequence is LPYMLIVAVVLGFGIPVMTIIAC. The Cytoplasmic segment spans residues 211–236; sequence YSILTHKLHQAAKSNQLTERSGKTKK. A helical membrane pass occupies residues 237–260; that stretch reads ARGVIAGVVFVFVVCFSPYHIDIL. Over 261 to 280 the chain is Extracellular; the sequence is QYMIRKLLYETDCKELQSFQ. The chain crosses the membrane as a helical span at residues 281–305; sequence ISLHITVCLMNLNSCLDPFVYFFAC. Residues 306 to 366 lie on the Cytoplasmic side of the membrane; it reads KGYKQKVMRM…QQICYQPSAT (61 aa).

It belongs to the G-protein coupled receptor 1 family.

The protein resides in the cell membrane. Functionally, probable receptor for oxysterols that plays a central role during humoral immunity. Promotes activated B-cell localization in the outer follicle and interfollicular regions. In Danio rerio (Zebrafish), this protein is G-protein coupled receptor 183-B (gpr183b).